Reading from the N-terminus, the 200-residue chain is Integrin beta-1-binding protein 1 (200 aa).

Residues 1 to 10 (MFRKGKKRHS) are compositionally biased toward basic residues. The tract at residues 1–55 (MFRKGKKRHSSSSSQSSEISTKSKSVDSSLGGLSRSSTVASLDTDSTKSSGQSNS) is disordered. A Nuclear localization signal motif is present at residues 6–7 (KK). A compositionally biased stretch (low complexity) spans 11–29 (SSSSQSSEISTKSKSVDSS). Positions 34-55 (SRSSTVASLDTDSTKSSGQSNS) are enriched in polar residues. T38 is modified (phosphothreonine; by CaMK2). S41 is modified (phosphoserine). In terms of domain architecture, PID spans 58-200 (DTCAEFRIKY…FDSVLTSDKS (143 aa)). The interval 136–139 (YLII) is interaction with KRIT1. The tract at residues 139–141 (IRM) is interaction with ITGB1.

In terms of assembly, found in a complex, at least composed of ITGB1BP1, KRIT1 and RAP1A. Interacts (via C-terminal region) with ITGB1 (via C-terminal cytoplasmic tail); the interaction prevents talin TLN1 binding to ITGB1 and KRIT1 and ITGB1 compete for the same binding site. Interacts with KRIT1 (via N-terminal NPXY motif); the interaction induces the opening conformation of KRIT1 and KRIT1 and ITGB1 compete for the same binding site. Isoform 2 does not interact with ITGB1. Interacts with CDC42 (GTP- or GDP-bound form); the interaction is increased with the CDC42-membrane bound forms and prevents both CDC42 activation and cell spreading. Interacts (via C-terminal domain region) with NME2. Interacts with FERMT2 and RAC1. Interacts (via N-terminus and PTB domain) with ROCK1. Post-translationally, phosphorylation at Thr-38 seems to enhance integrin alpha5beta1-mediated cell adhesion. The degree of phosphorylation is regulated by integrin-dependent cell-matrix interaction. Expressed in the brain.

The protein resides in the nucleus. It localises to the cytoplasm. It is found in the cytoskeleton. Its subcellular location is the cell membrane. The protein localises to the cell projection. The protein resides in the lamellipodium. It localises to the ruffle. Its function is as follows. Key regulator of the integrin-mediated cell-matrix interaction signaling by binding to the ITGB1 cytoplasmic tail and preventing the activation of integrin alpha-5/beta-1 (heterodimer of ITGA5 and ITGB1) by talin or FERMT1. Plays a role in cell proliferation, differentiation, spreading, adhesion and migration in the context of mineralization and bone development and angiogenesis. Stimulates cellular proliferation in a fibronectin-dependent manner. Involved in the regulation of beta-1 integrin-containing focal adhesion (FA) site dynamics by controlling its assembly rate during cell adhesion; inhibits beta-1 integrin clustering within FA by directly competing with talin TLN1, and hence stimulates osteoblast spreading and migration in a fibronectin- and/or collagen-dependent manner. Acts as a guanine nucleotide dissociation inhibitor (GDI) by regulating Rho family GTPases during integrin-mediated cell matrix adhesion; reduces the level of active GTP-bound form of both CDC42 and RAC1 GTPases upon cell adhesion to fibronectin. Stimulates the release of active CDC42 from the membranes to maintain it in an inactive cytoplasmic pool. Participates in the translocation of the Rho-associated protein kinase ROCK1 to membrane ruffles at cell leading edges of the cell membrane, leading to an increase of myoblast cell migration on laminin. Plays a role in bone mineralization at a late stage of osteoblast differentiation; modulates the dynamic formation of focal adhesions into fibrillar adhesions, which are adhesive structures responsible for fibronectin deposition and fibrillogenesis. Plays a role in blood vessel development; acts as a negative regulator of angiogenesis by attenuating endothelial cell proliferation and migration, lumen formation and sprouting angiogenesis by promoting AKT phosphorylation and inhibiting ERK1/2 phosphorylation through activation of the Notch signaling pathway. Promotes transcriptional activity of the MYC promoter. The sequence is that of Integrin beta-1-binding protein 1 (Itgb1bp1) from Mus musculus (Mouse).